The chain runs to 188 residues: Peptidyl-tRNA hydrolase (188 aa).

Residue Y15 coordinates tRNA. H20 functions as the Proton acceptor in the catalytic mechanism. Residues F63, N65, and N111 each contribute to the tRNA site.

It belongs to the PTH family. As to quaternary structure, monomer.

The protein localises to the cytoplasm. The catalysed reaction is an N-acyl-L-alpha-aminoacyl-tRNA + H2O = an N-acyl-L-amino acid + a tRNA + H(+). In terms of biological role, hydrolyzes ribosome-free peptidyl-tRNAs (with 1 or more amino acids incorporated), which drop off the ribosome during protein synthesis, or as a result of ribosome stalling. Catalyzes the release of premature peptidyl moieties from peptidyl-tRNA molecules trapped in stalled 50S ribosomal subunits, and thus maintains levels of free tRNAs and 50S ribosomes. This chain is Peptidyl-tRNA hydrolase, found in Hydrogenobaculum sp. (strain Y04AAS1).